The sequence spans 632 residues: Probable potassium transport system protein Kup 1 (632 aa).

Helical transmembrane passes span 17 to 37 (LFYL…TSPL), 60 to 80 (LISL…VLFL), 106 to 126 (TALL…DAMI), 144 to 164 (PSLA…LFVV), 175 to 195 (FFGP…ISHI), 210 to 230 (AVSF…AVFL), 254 to 274 (WFLL…ALVL), 292 to 312 (ALLP…QAVI), 344 to 364 (IFLP…VLSF), 370 to 390 (LATA…IMAF), 401 to 421 (LPVA…FLGA), and 426 to 446 (IHDG…VMWT).

It belongs to the HAK/KUP transporter (TC 2.A.72) family.

It is found in the cell inner membrane. It catalyses the reaction K(+)(in) + H(+)(in) = K(+)(out) + H(+)(out). Its function is as follows. Transport of potassium into the cell. Likely operates as a K(+):H(+) symporter. The polypeptide is Probable potassium transport system protein Kup 1 (Rhizobium etli (strain ATCC 51251 / DSM 11541 / JCM 21823 / NBRC 15573 / CFN 42)).